Here is a 708-residue protein sequence, read N- to C-terminus: tRNA 5-methylaminomethyl-2-thiouridine biosynthesis bifunctional protein MnmC (708 aa).

The interval 1–278 (MTAEPNKPCQ…ERQVLRQQDA (278 aa)) is tRNA (mnm(5)s(2)U34)-methyltransferase. The FAD-dependent cmnm(5)s(2)U34 oxidoreductase stretch occupies residues 301 to 708 (IGGGLASAHL…LRKLLKGKAL (408 aa)).

It in the N-terminal section; belongs to the methyltransferase superfamily. tRNA (mnm(5)s(2)U34)-methyltransferase family. This sequence in the C-terminal section; belongs to the DAO family. Requires FAD as cofactor.

It localises to the cytoplasm. It carries out the reaction 5-aminomethyl-2-thiouridine(34) in tRNA + S-adenosyl-L-methionine = 5-methylaminomethyl-2-thiouridine(34) in tRNA + S-adenosyl-L-homocysteine + H(+). Functionally, catalyzes the last two steps in the biosynthesis of 5-methylaminomethyl-2-thiouridine (mnm(5)s(2)U) at the wobble position (U34) in tRNA. Catalyzes the FAD-dependent demodification of cmnm(5)s(2)U34 to nm(5)s(2)U34, followed by the transfer of a methyl group from S-adenosyl-L-methionine to nm(5)s(2)U34, to form mnm(5)s(2)U34. This chain is tRNA 5-methylaminomethyl-2-thiouridine biosynthesis bifunctional protein MnmC, found in Shewanella baltica (strain OS195).